The following is a 567-amino-acid chain: SRSF protein kinase 3 (567 aa).

Positions 1 to 16 are enriched in gly residues; sequence MSASTGGGGDSGGSGG. The tract at residues 1–36 is disordered; sequence MSASTGGGGDSGGSGGSSSSSQASCGPESSGSELAL. Residues 17 to 32 are compositionally biased toward low complexity; it reads SSSSSQASCGPESSGS. A Phosphoserine modification is found at serine 50. In terms of domain architecture, Protein kinase spans 79–565; that stretch reads YHVVRKLGWG…AADCLQHPWL (487 aa). Residues 85–93 and lysine 108 each bind ATP; that span reads LGWGHFSTV. The active-site Proton acceptor is aspartate 212. Disordered regions lie at residues 238–283 and 298–351; these read QQAG…RLLE and ATQA…SQTS. The span at 248-258 shows a compositional bias: polar residues; it reads SIVSTAPQEVL. Positions 264-279 are enriched in basic residues; sequence SKNKRKKMRRKRKQQK. The segment covering 327–348 has biased composition (low complexity); that stretch reads AGPSPASSSPAPGGGRSLSAGS. Phosphoserine is present on serine 330.

The protein belongs to the protein kinase superfamily. CMGC Ser/Thr protein kinase family. In terms of tissue distribution, expressed in skeletal and heart muscle. Also expressed in the fetal brain.

The protein resides in the nucleus. It localises to the cytoplasm. It catalyses the reaction L-seryl-[protein] + ATP = O-phospho-L-seryl-[protein] + ADP + H(+). It carries out the reaction L-threonyl-[protein] + ATP = O-phospho-L-threonyl-[protein] + ADP + H(+). Its function is as follows. Serine/arginine-rich protein-specific kinase which specifically phosphorylates its substrates at serine residues located in regions rich in arginine/serine dipeptides, known as RS domains. Phosphorylates the SR splicing factor SRSF1 and the lamin-B receptor (LBR) in vitro. Required for normal muscle development. This Homo sapiens (Human) protein is SRSF protein kinase 3 (SRPK3).